The sequence spans 224 residues: uncharacterized protein (224 aa).

The Matrin-type zinc finger occupies 11-42 (YYCKYCQIFVKDTPFARRSHEQTYKHQDAIKK). A compositionally biased stretch (low complexity) spans 67 to 80 (ATATTASAVSSELA). Disordered stretches follow at residues 67 to 158 (ATAT…RNRE) and 172 to 224 (VKPK…YDQS). The span at 87–98 (KEHPKLRPSKKK) shows a compositional bias: basic residues. Positions 108 to 122 (TSSTETDTISTTHTS) are enriched in low complexity. Residues 175-199 (KNLDKVPKLAENEGNKSLESKESNE) are compositionally biased toward basic and acidic residues. A compositionally biased stretch (basic residues) spans 203–216 (VFKKKKSGKLRTKS).

The protein resides in the nucleus. The protein localises to the nucleolus. This is an uncharacterized protein from Schizosaccharomyces pombe (strain 972 / ATCC 24843) (Fission yeast).